We begin with the raw amino-acid sequence, 149 residues long: 3-dehydroquinate dehydratase (149 aa).

The active-site Proton acceptor is Tyr-22. Positions 73, 79, and 86 each coordinate substrate. His-99 functions as the Proton donor in the catalytic mechanism. Substrate contacts are provided by residues 100 to 101 and Arg-110; that span reads LS.

It belongs to the type-II 3-dehydroquinase family. In terms of assembly, homododecamer.

The catalysed reaction is 3-dehydroquinate = 3-dehydroshikimate + H2O. Its pathway is metabolic intermediate biosynthesis; chorismate biosynthesis; chorismate from D-erythrose 4-phosphate and phosphoenolpyruvate: step 3/7. In terms of biological role, catalyzes a trans-dehydration via an enolate intermediate. The sequence is that of 3-dehydroquinate dehydratase from Prochlorococcus marinus (strain MIT 9313).